A 165-amino-acid chain; its full sequence is Ubiquitin-fold modifier-conjugating enzyme 1 (165 aa).

Residue Cys116 is the Glycyl thioester intermediate of the active site.

The protein belongs to the ubiquitin-conjugating enzyme family. UFC1 subfamily.

E2-like enzyme which forms an intermediate with UFM1 via a thioester linkage. The sequence is that of Ubiquitin-fold modifier-conjugating enzyme 1 from Drosophila mojavensis (Fruit fly).